We begin with the raw amino-acid sequence, 189 residues long: Protein Rex (189 aa).

Positions 1–16 are enriched in basic residues; the sequence is MPKTRRGPRRSQRKRP. The segment at 1–26 is disordered; that stretch reads MPKTRRGPRRSQRKRPPTPWPTSQGL. Positions 2–18 match the Nuclear localization signal, and RNA-binding (RxRE) motif; that stretch reads PKTRRGPRRSQRKRPPT. Positions 56–70 are homomultimerization; it reads RPAYIVTPYWPPVQS. Ser70 is subject to Phosphoserine; by host. The Nuclear export signal signature appears at 82–93; the sequence is LSAQLYSSLSLG. A disordered region spans residues 87-189; the sequence is YSSLSLGSPP…PPSPGPSCPR (103 aa). Pro residues predominate over residues 115–125; sequence IQPPTFHPPSS. The interval 123–131 is homomultimerization; sequence PSSRPYANT. Phosphothreonine; by host is present on Thr174. A Phosphoserine; by host modification is found at Ser177. Residues 178-189 show a composition bias toward pro residues; it reads FPPPSPGPSCPR.

This sequence belongs to the deltaretrovirus Rex protein family. In terms of assembly, homomultimer. Multimeric assembly is essential for activity and involves XPO1. Binds to human XPO1 and KPNB1. Interacts (via N-terminal nuclear localization signal) with human NPM1. In terms of processing, phosphorylated.

It localises to the host nucleus. The protein localises to the host nucleolus. Its subcellular location is the host cytoplasm. Functionally, rex escorts unspliced gag-pro-pol and singly spliced env mRNAs out of the nucleus of infected cells. These mRNAs carry a recognition sequence called Rex responsive element (RxRE or XRE) located at the 3' region of the long terminal repeat (LTR). This function is essential since most HTLV proteins are translated from unspliced or partially spliced pre-mRNAs that cannot exit the nucleus by the pathway used by fully processed cellular mRNAs. Rex itself is translated from a fully spliced mRNA that probably readily exits the nucleus. Rex's nuclear localization signal (NLS) binds directly to KPNB1/importin beta-1 without previous binding to KPNA1/importin alpha-1. KPNB1 binds to the GDP bound form of RAN (Ran-GDP) and targets Rex to the nucleus. In the nucleus, the conversion from Ran-GDP to Ran-GTP dissociates Rex from KPNB1 and allows Rex's binding to the RRE in viral pre-mRNAs. Rex multimerizes on the RRE via cooperative assembly. This multimerization is critical for its full biological activity, since it may shield the viral RNA from being spliced or down-regulated, and probably exposes Rex's nuclear export signal (NES) to the surface. Rex can then form a complex with XPO1/CRM1, RANBP3 and Ran-GTP, leading to nuclear export of the complex. Conversion from Ran-GTP to Ran-GDP mediates dissociation of the Rex/RRE/XPO1/RANBP3/RAN complex, so that Rex can return to the nucleus for a subsequent round of export. In Homo sapiens (Human), this protein is Protein Rex.